Reading from the N-terminus, the 322-residue chain is TATA box-binding protein-like 2 (322 aa).

The tract at residues 31 to 54 (PALSSTQDSTYLSGRAGPSRESGA) is disordered. Over residues 32-42 (ALSSTQDSTYL) the composition is skewed to polar residues.

It belongs to the TBP family.

The protein resides in the nucleus. In terms of biological role, TATA box-binding transcription factor. Members of the TBP family are differentially required to regulate transcription and development during early embryogenesis. The sequence is that of TATA box-binding protein-like 2 from Takifugu rubripes (Japanese pufferfish).